Here is a 215-residue protein sequence, read N- to C-terminus: 3-isopropylmalate dehydratase small subunit (215 aa).

It belongs to the LeuD family. LeuD type 1 subfamily. Heterodimer of LeuC and LeuD.

The catalysed reaction is (2R,3S)-3-isopropylmalate = (2S)-2-isopropylmalate. It participates in amino-acid biosynthesis; L-leucine biosynthesis; L-leucine from 3-methyl-2-oxobutanoate: step 2/4. Its function is as follows. Catalyzes the isomerization between 2-isopropylmalate and 3-isopropylmalate, via the formation of 2-isopropylmaleate. The polypeptide is 3-isopropylmalate dehydratase small subunit (Xylella fastidiosa (strain 9a5c)).